Here is a 72-residue protein sequence, read N- to C-terminus: BBSome-interacting protein 1 (72 aa).

It belongs to the BBIP10 family.

The protein localises to the cell projection. It localises to the cilium. It is found in the cytoplasm. In terms of biological role, required for primary cilia assembly. The sequence is that of BBSome-interacting protein 1 (bbip1) from Danio rerio (Zebrafish).